The sequence spans 94 residues: Large ribosomal subunit protein uL23 (94 aa).

Belongs to the universal ribosomal protein uL23 family. In terms of assembly, part of the 50S ribosomal subunit. Contacts protein L29, and trigger factor when it is bound to the ribosome.

In terms of biological role, one of the early assembly proteins it binds 23S rRNA. One of the proteins that surrounds the polypeptide exit tunnel on the outside of the ribosome. Forms the main docking site for trigger factor binding to the ribosome. In Latilactobacillus sakei subsp. sakei (strain 23K) (Lactobacillus sakei subsp. sakei), this protein is Large ribosomal subunit protein uL23.